Here is a 284-residue protein sequence, read N- to C-terminus: 2,3,4,5-tetrahydropyridine-2,6-dicarboxylate N-succinyltransferase (284 aa).

Residues arginine 111 and aspartate 148 each contribute to the substrate site.

This sequence belongs to the transferase hexapeptide repeat family. In terms of assembly, homotrimer.

The protein localises to the cytoplasm. It carries out the reaction (S)-2,3,4,5-tetrahydrodipicolinate + succinyl-CoA + H2O = (S)-2-succinylamino-6-oxoheptanedioate + CoA. It functions in the pathway amino-acid biosynthesis; L-lysine biosynthesis via DAP pathway; LL-2,6-diaminopimelate from (S)-tetrahydrodipicolinate (succinylase route): step 1/3. This Brucella melitensis biotype 2 (strain ATCC 23457) protein is 2,3,4,5-tetrahydropyridine-2,6-dicarboxylate N-succinyltransferase.